Here is a 146-residue protein sequence, read N- to C-terminus: Hemoglobin subunit beta (146 aa).

An N-acetylvaline modification is found at V1. The Globin domain occupies 2-146; the sequence is QLSGEEKAAV…VANALAHKYH (145 aa). S44 is modified (phosphoserine). Position 59 is an N6-acetyllysine (K59). Residue H63 participates in heme b binding. Residue K82 is modified to N6-acetyllysine. Position 92 (H92) interacts with heme b. S-nitrosocysteine is present on C93. Position 144 is an N6-acetyllysine (K144).

Belongs to the globin family. In terms of assembly, heterotetramer of two alpha chains and two beta chains. As to expression, red blood cells.

Involved in oxygen transport from the lung to the various peripheral tissues. The polypeptide is Hemoglobin subunit beta (HBB) (Equus hemionus kulan (Turkmenian kulan)).